A 156-amino-acid chain; its full sequence is Small ribosomal subunit protein uS7 (156 aa).

Belongs to the universal ribosomal protein uS7 family. Part of the 30S ribosomal subunit. Contacts proteins S9 and S11.

One of the primary rRNA binding proteins, it binds directly to 16S rRNA where it nucleates assembly of the head domain of the 30S subunit. Is located at the subunit interface close to the decoding center, probably blocks exit of the E-site tRNA. The polypeptide is Small ribosomal subunit protein uS7 (Pseudoalteromonas translucida (strain TAC 125)).